We begin with the raw amino-acid sequence, 380 residues long: Chaperone protein DnaJ (380 aa).

Residues 5 to 72 form the J domain; the sequence is DFYEVLGVAK…NKRAAYDQYG (68 aa). Residues 140-218 form a CR-type zinc finger; sequence GKDAQIRIPS…CGGQGKVKRQ (79 aa). Zn(2+)-binding residues include cysteine 153, cysteine 156, cysteine 170, cysteine 173, cysteine 192, cysteine 195, cysteine 206, and cysteine 209. CXXCXGXG motif repeat units follow at residues 153 to 160, 170 to 177, 192 to 199, and 206 to 213; these read CDTCHGSG, CTTCNGMG, CPHCRGTG, and CTSCGGQG. Positions 359–380 are disordered; the sequence is KGGAKHSPSGESWTDRLKSFFS. The span at 371–380 shows a compositional bias: basic and acidic residues; it reads WTDRLKSFFS.

It belongs to the DnaJ family. In terms of assembly, homodimer. It depends on Zn(2+) as a cofactor.

It is found in the cytoplasm. Its function is as follows. Participates actively in the response to hyperosmotic and heat shock by preventing the aggregation of stress-denatured proteins and by disaggregating proteins, also in an autonomous, DnaK-independent fashion. Unfolded proteins bind initially to DnaJ; upon interaction with the DnaJ-bound protein, DnaK hydrolyzes its bound ATP, resulting in the formation of a stable complex. GrpE releases ADP from DnaK; ATP binding to DnaK triggers the release of the substrate protein, thus completing the reaction cycle. Several rounds of ATP-dependent interactions between DnaJ, DnaK and GrpE are required for fully efficient folding. Also involved, together with DnaK and GrpE, in the DNA replication of plasmids through activation of initiation proteins. The protein is Chaperone protein DnaJ of Delftia acidovorans (strain DSM 14801 / SPH-1).